The following is a 705-amino-acid chain: Prolyl endopeptidase (705 aa).

The signal sequence occupies residues 1–20 (MKYNKLSVAVAAFAFAAVSA). Active-site charge relay system residues include Ser556 and His675.

Belongs to the peptidase S9A family. Monomer.

The protein localises to the periplasm. It catalyses the reaction Hydrolysis of Pro-|-Xaa &gt;&gt; Ala-|-Xaa in oligopeptides.. Functionally, cleaves peptide bonds on the C-terminal side of prolyl residues within peptides that are up to approximately 30 amino acids long. Has an absolute requirement for an X-Pro bond in the trans configuration immediately preceding the Pro-Y scissible bond. This chain is Prolyl endopeptidase (f1pep1), found in Elizabethkingia meningoseptica (Chryseobacterium meningosepticum).